Consider the following 185-residue polypeptide: MAPIKSRRIAVLGSRSVGKSSLTVQYVENHFVESYYPTIENTFSKNIKYKGQEFATEIIDTAGQDEYSILNSKHSIGIHGYVLVYSITSKSSFEMVKIVRDKILNHTGTEWVPIVVVGNKSDLHMQRAVTAEEGKALANEWKCAWTEASARHNENVARAFELIISEIEKQANPSPPGDGKGCVIA.

GTP-binding residues include Ser16, Gly18, Lys19, Ser20, Ser21, Val32, Tyr35, Thr38, Asn119, Asp122, and Ala150. A Mg(2+)-binding site is contributed by Ser20. Residues Tyr35–Phe43 carry the Effector region motif. Position 38 (Thr38) interacts with Mg(2+). The residue at position 182 (Cys182) is a Cysteine methyl ester. Residue Cys182 is the site of S-farnesyl cysteine attachment. Positions Val183–Ala185 are cleaved as a propeptide — removed in mature form.

Belongs to the small GTPase superfamily. Rheb family.

The protein localises to the cell membrane. The enzyme catalyses GTP + H2O = GDP + phosphate + H(+). Binds GTP and exhibits intrinsic GTPase activity. Regulates entry into stationary phase when extracellular nitrogen levels are adequate for growth. This chain is GTP-binding protein rhb1 (rhb1), found in Schizosaccharomyces pombe (strain 972 / ATCC 24843) (Fission yeast).